Reading from the N-terminus, the 166-residue chain is Interferon gamma (166 aa).

The signal sequence occupies residues 1–23 (MKYTSYILALQLCVLLGFSGSYG). The residue at position 24 (glutamine 24) is a Pyrrolidone carboxylic acid. Residues asparagine 39 and asparagine 106 are each glycosylated (N-linked (GlcNAc...) asparagine).

Belongs to the type II (or gamma) interferon family. In terms of assembly, homodimer. Interacts with IFNGR1 (via extracellular domain); this interaction promotes IFNGR1 dimerization. In terms of tissue distribution, released primarily from activated T lymphocytes.

The protein localises to the secreted. In terms of biological role, type II interferon produced by immune cells such as T-cells and NK cells that plays crucial roles in antimicrobial, antiviral, and antitumor responses by activating effector immune cells and enhancing antigen presentation. Primarily signals through the JAK-STAT pathway after interaction with its receptor IFNGR1 to affect gene regulation. Upon IFNG binding, IFNGR1 intracellular domain opens out to allow association of downstream signaling components JAK2, JAK1 and STAT1, leading to STAT1 activation, nuclear translocation and transcription of IFNG-regulated genes. Many of the induced genes are transcription factors such as IRF1 that are able to further drive regulation of a next wave of transcription. Plays a role in class I antigen presentation pathway by inducing a replacement of catalytic proteasome subunits with immunoproteasome subunits. In turn, increases the quantity, quality, and repertoire of peptides for class I MHC loading. Increases the efficiency of peptide generation also by inducing the expression of activator PA28 that associates with the proteasome and alters its proteolytic cleavage preference. Up-regulates as well MHC II complexes on the cell surface by promoting expression of several key molecules such as cathepsins B/CTSB, H/CTSH, and L/CTSL. Participates in the regulation of hematopoietic stem cells during development and under homeostatic conditions by affecting their development, quiescence, and differentiation. The polypeptide is Interferon gamma (IFNG) (Cervus elaphus (Red deer)).